Here is a 150-residue protein sequence, read N- to C-terminus: Large ribosomal subunit protein bL9 (150 aa).

This sequence belongs to the bacterial ribosomal protein bL9 family.

Functionally, binds to the 23S rRNA. The polypeptide is Large ribosomal subunit protein bL9 (Methylibium petroleiphilum (strain ATCC BAA-1232 / LMG 22953 / PM1)).